The following is a 356-amino-acid chain: Phosphoserine aminotransferase (356 aa).

Residue Arg41 coordinates L-glutamate. Pyridoxal 5'-phosphate is bound by residues 75 to 76 (AT), Trp100, Thr147, Asp166, and Gln189. An N6-(pyridoxal phosphate)lysine modification is found at Lys190. 227–228 (NT) lines the pyridoxal 5'-phosphate pocket.

The protein belongs to the class-V pyridoxal-phosphate-dependent aminotransferase family. SerC subfamily. Homodimer. Pyridoxal 5'-phosphate is required as a cofactor.

The protein resides in the cytoplasm. It catalyses the reaction O-phospho-L-serine + 2-oxoglutarate = 3-phosphooxypyruvate + L-glutamate. The catalysed reaction is 4-(phosphooxy)-L-threonine + 2-oxoglutarate = (R)-3-hydroxy-2-oxo-4-phosphooxybutanoate + L-glutamate. Its pathway is amino-acid biosynthesis; L-serine biosynthesis; L-serine from 3-phospho-D-glycerate: step 2/3. Its function is as follows. Catalyzes the reversible conversion of 3-phosphohydroxypyruvate to phosphoserine and of 3-hydroxy-2-oxo-4-phosphonooxybutanoate to phosphohydroxythreonine. The chain is Phosphoserine aminotransferase from Exiguobacterium sp. (strain ATCC BAA-1283 / AT1b).